The chain runs to 330 residues: Probable deoxyhypusine synthase (330 aa).

Residues 1-25 (MTGDDADETHENVVPGSDEDLDTPD) are disordered. The active-site Nucleophile is the Lys-298.

Belongs to the deoxyhypusine synthase family. NAD(+) serves as cofactor.

The enzyme catalyses [eIF5A protein]-L-lysine + spermidine = [eIF5A protein]-deoxyhypusine + propane-1,3-diamine. Its pathway is protein modification; eIF5A hypusination. Catalyzes the NAD-dependent oxidative cleavage of spermidine and the subsequent transfer of the butylamine moiety of spermidine to the epsilon-amino group of a specific lysine residue of the eIF-5A precursor protein to form the intermediate deoxyhypusine residue. The sequence is that of Probable deoxyhypusine synthase from Halobacterium salinarum (strain ATCC 29341 / DSM 671 / R1).